Here is a 444-residue protein sequence, read N- to C-terminus: Methylenetetrahydrofolate--tRNA-(uracil-5-)-methyltransferase TrmFO (444 aa).

FAD is bound at residue 10-15 (GAGLAG).

Belongs to the MnmG family. TrmFO subfamily. It depends on FAD as a cofactor.

The protein resides in the cytoplasm. It carries out the reaction uridine(54) in tRNA + (6R)-5,10-methylene-5,6,7,8-tetrahydrofolate + NADH + H(+) = 5-methyluridine(54) in tRNA + (6S)-5,6,7,8-tetrahydrofolate + NAD(+). The catalysed reaction is uridine(54) in tRNA + (6R)-5,10-methylene-5,6,7,8-tetrahydrofolate + NADPH + H(+) = 5-methyluridine(54) in tRNA + (6S)-5,6,7,8-tetrahydrofolate + NADP(+). Its function is as follows. Catalyzes the folate-dependent formation of 5-methyl-uridine at position 54 (M-5-U54) in all tRNAs. This is Methylenetetrahydrofolate--tRNA-(uracil-5-)-methyltransferase TrmFO from Streptococcus gordonii (strain Challis / ATCC 35105 / BCRC 15272 / CH1 / DL1 / V288).